The following is a 143-amino-acid chain: Transcriptional regulator MraZ (143 aa).

2 consecutive SpoVT-AbrB domains span residues 5–47 and 76–119; these read TFTP…PRNV and ADEQ…NAES.

This sequence belongs to the MraZ family. As to quaternary structure, forms oligomers.

The protein localises to the cytoplasm. The protein resides in the nucleoid. The polypeptide is Transcriptional regulator MraZ (Corynebacterium kroppenstedtii (strain DSM 44385 / JCM 11950 / CIP 105744 / CCUG 35717)).